The sequence spans 41 residues: Perlinhibin (41 aa).

Contains four disulfide bonds.

Its function is as follows. Binds to calcite crystals in the shell and inhibits further shell growth at the binding site. This is Perlinhibin from Haliotis laevigata (Smooth Australian abalone).